The primary structure comprises 250 residues: High affinity immunoglobulin epsilon receptor subunit alpha (250 aa).

Positions 1–23 are cleaved as a signal peptide; that stretch reads MVTGRSAQLCLALLFMSLDVILT. The Extracellular segment spans residues 24–204; sequence ATEKSVLTLD…AYKCKYYWLQ (181 aa). The region spanning 28–104 is the Ig-like 1 domain; sequence SVLTLDPPWI…QGLFKSKPVY (77 aa). Cysteines 49 and 92 form a disulfide. N-linked (GlcNAc...) asparagine glycosylation is found at N58, N66, N73, N106, N152, and N167. Residues 114 to 181 form the Ig-like 2 domain; it reads LQTSADMVLV…YHCKGYLRQV (68 aa). C131 and C174 form a disulfide bridge. The chain crosses the membrane as a helical span at residues 205–223; that stretch reads LIFPLLVAILFAVDTGLLL. Over 224 to 250 the chain is Cytoplasmic; sequence STEEQFKSVLEIQKTGKYKKVETELLT.

As to quaternary structure, tetramer of an alpha chain, a beta chain, and two disulfide linked gamma chains. Interacts with IGHE (via CH3 region). As to expression, expressed in bone marrow mast cells, as well as in the pineal gland at night.

It localises to the cell membrane. Its function is as follows. High-affinity receptor for immunoglobulin epsilon/IgE. Mediates IgE effector functions in myeloid cells. Upon IgE binding and antigen/allergen cross-linking initiates signaling pathways that lead to myeloid cell activation and differentiation. On mast cells, basophils and eosinophils stimulates the secretion of vasoactive amines, lipid mediators and cytokines that contribute to inflammatory response, tissue remodeling and cytotoxicity against microbes. Triggers the immediate hypersensitivity response to allergens as a host defense mechanism against helminth parasites, pathogenic bacteria and venom toxicity. When dysregulated, it can elicit harmful life-threatening allergic and anaphylactic reactions. This Mus musculus (Mouse) protein is High affinity immunoglobulin epsilon receptor subunit alpha (Fcer1a).